The sequence spans 259 residues: Probable ABC transporter permease protein RBE_1340 (259 aa).

The next 5 membrane-spanning stretches (helical) occupy residues 25 to 45 (IFSLAAITSIIRPPLYFSLII), 49 to 69 (LFIGFYSLPVVAMTTFFSGAV), 148 to 168 (VIAAIITMPCLVLIGDVIGVM), 195 to 215 (PIDVISGLVKAGVFGFIISII), and 237 to 257 (AVVNSSILILISNYLITELFF).

The protein belongs to the MlaE permease family.

It localises to the cell inner membrane. Its function is as follows. Could be part of an ABC transporter complex. This is Probable ABC transporter permease protein RBE_1340 from Rickettsia bellii (strain RML369-C).